We begin with the raw amino-acid sequence, 519 residues long: Protein BANP (519 aa).

3 positions are modified to phosphoserine: Ser19, Ser90, and Ser100. Residues 53-90 (IKTICLRLDSIEAKLQALEATCKSLEEKLDLVTNKQHS) adopt a coiled-coil conformation. Residue Lys133 forms a Glycyl lysine isopeptide (Lys-Gly) (interchain with G-Cter in SUMO2) linkage. The interaction with CUX1 and HDAC1 stretch occupies residues 152–342 (NAVPGRRQNT…FSRRTPNSSS (191 aa)). Basic and acidic residues predominate over residues 168–177 (GQEDSHHEDG). The segment at 168–196 (GQEDSHHEDGESGSEASDSVSSCGQAGSQ) is disordered. Residues 180–189 (GSEASDSVSS) are compositionally biased toward low complexity. In terms of domain architecture, BEN spans 226 to 322 (EMRVRCAIIP…SKCRTAWRRK (97 aa)). The residue at position 275 (Lys275) is an N6-acetyllysine. The segment at 327 to 364 (SLAVKSFSRRTPNSSSYCPSEPMMSTPPPASELPQPQP) is disordered. Residues 335-344 (RRTPNSSSYC) are compositionally biased toward polar residues. Phosphothreonine occurs at positions 337 and 352. The interval 342–393 (SYCPSEPMMSTPPPASELPQPQPQPQALHYALANAQQVQIHQIGEDGQVQVG) is DNA-binding. The segment covering 351–364 (STPPPASELPQPQP) has biased composition (pro residues).

This sequence belongs to the BANP/SMAR1 family. In terms of assembly, part of a corepressor complex containing BANP, HDAC1, SIN3A, SIN3B, RBL1 and RBL2. Forms a trimeric complex in the nucleus consisting of BANP, HDAC6 and KHDRBS1/SAM68; HDAC6 keeps KHDRBS1 in a deacetylated state which inhibits the inclusion of CD44 alternate exons. The complex is disrupted by MAPK1/MAPK3-mediated phosphorylation of BANP which results in BANP export to the cytoplasm. This facilitates acetylation of KHDRBS1 and CD44 variant exon inclusion. Interacts with TP53. Interacts with CUX1/CDP. Interacts with HDAC1. Post-translationally, MAPK1/MAPK3-mediated phosphorylation at Thr-337 and Thr-352 results in export to the cytoplasm. In terms of tissue distribution, down-regulated in breast cancer cell lines.

Its subcellular location is the nucleus. The protein localises to the nucleus speckle. It is found in the cytoplasm. Functionally, controls V(D)J recombination during T-cell development by repressing T-cell receptor (TCR) beta enhancer function. Binds to scaffold/matrix attachment region beta (S/MARbeta), an ATC-rich DNA sequence located upstream of the TCR beta enhancer. Represses cyclin D1 transcription by recruiting HDAC1 to its promoter, thereby diminishing H3K9ac, H3S10ph and H4K8ac levels. Promotes TP53 activation, which causes cell cycle arrest. Plays a role in the regulation of alternative splicing. Binds to CD44 pre-mRNA and negatively regulates the inclusion of CD44 proximal variable exons v2-v6 but has no effect on distal variable exons v7-v10. This Homo sapiens (Human) protein is Protein BANP (BANP).